The primary structure comprises 84 residues: Cytochrome b559 subunit alpha (84 aa).

Topologically, residues 2–20 are cytoplasmic; that stretch reads AGTTGERPFSDIITSVRYW. The chain crosses the membrane as a helical span at residues 21 to 35; it reads VIHSITIPALFIAGW. Residue H23 coordinates heme. Over 36-84 the chain is Lumenal; sequence LFVSTGLAYDVFGTPRPDSYYAQEQRSIPLVTDRFEAKQQVETFLEQLK.

This sequence belongs to the PsbE/PsbF family. As to quaternary structure, heterodimer of an alpha subunit and a beta subunit. PSII is composed of 1 copy each of membrane proteins PsbA, PsbB, PsbC, PsbD, PsbE, PsbF, PsbH, PsbI, PsbJ, PsbK, PsbL, PsbM, PsbT, PsbX, PsbY, PsbZ, Psb30/Ycf12, peripheral proteins PsbO, CyanoQ (PsbQ), PsbU, PsbV and a large number of cofactors. It forms dimeric complexes. Requires heme b as cofactor.

It localises to the cellular thylakoid membrane. Functionally, this b-type cytochrome is tightly associated with the reaction center of photosystem II (PSII). PSII is a light-driven water:plastoquinone oxidoreductase that uses light energy to abstract electrons from H(2)O, generating O(2) and a proton gradient subsequently used for ATP formation. It consists of a core antenna complex that captures photons, and an electron transfer chain that converts photonic excitation into a charge separation. The polypeptide is Cytochrome b559 subunit alpha (Thermostichus vulcanus (Synechococcus vulcanus)).